The sequence spans 571 residues: Urease subunit alpha (571 aa).

One can recognise a Urease domain in the interval 133–571; that stretch reads GGIDTHVHFI…LPLTQRYFLF (439 aa). Residues H138, H140, and K221 each coordinate Ni(2+). An N6-carboxylysine modification is found at K221. H223 serves as a coordination point for substrate. Ni(2+)-binding residues include H250 and H276. Catalysis depends on H324, which acts as the Proton donor. D364 lines the Ni(2+) pocket.

This sequence belongs to the metallo-dependent hydrolases superfamily. Urease alpha subunit family. In terms of assembly, heterotrimer of UreA (gamma), UreB (beta) and UreC (alpha) subunits. Three heterotrimers associate to form the active enzyme. Ni cation serves as cofactor. In terms of processing, carboxylation allows a single lysine to coordinate two nickel ions.

It is found in the cytoplasm. The enzyme catalyses urea + 2 H2O + H(+) = hydrogencarbonate + 2 NH4(+). It participates in nitrogen metabolism; urea degradation; CO(2) and NH(3) from urea (urease route): step 1/1. This chain is Urease subunit alpha, found in Staphylococcus aureus (strain MRSA252).